Reading from the N-terminus, the 259-residue chain is Protein-L-isoaspartate O-methyltransferase (259 aa).

The segment at 1–25 (MRKRVDPPAGGRLAPGITPANSNTR) is disordered. The active site involves serine 107.

It belongs to the methyltransferase superfamily. L-isoaspartyl/D-aspartyl protein methyltransferase family.

The protein resides in the cytoplasm. The catalysed reaction is [protein]-L-isoaspartate + S-adenosyl-L-methionine = [protein]-L-isoaspartate alpha-methyl ester + S-adenosyl-L-homocysteine. In terms of biological role, catalyzes the methyl esterification of L-isoaspartyl residues in peptides and proteins that result from spontaneous decomposition of normal L-aspartyl and L-asparaginyl residues. It plays a role in the repair and/or degradation of damaged proteins. The sequence is that of Protein-L-isoaspartate O-methyltransferase from Bordetella bronchiseptica (strain ATCC BAA-588 / NCTC 13252 / RB50) (Alcaligenes bronchisepticus).